The following is a 512-amino-acid chain: Lysine--tRNA ligase (512 aa).

2 residues coordinate Mg(2+): E408 and E415.

This sequence belongs to the class-II aminoacyl-tRNA synthetase family. Homodimer. Requires Mg(2+) as cofactor.

It is found in the cytoplasm. It catalyses the reaction tRNA(Lys) + L-lysine + ATP = L-lysyl-tRNA(Lys) + AMP + diphosphate. The chain is Lysine--tRNA ligase from Prochlorococcus marinus (strain MIT 9301).